Consider the following 127-residue polypeptide: Large ribosomal subunit protein uL22 (127 aa).

The protein belongs to the universal ribosomal protein uL22 family. In terms of assembly, part of the 50S ribosomal subunit.

Functionally, this protein binds specifically to 23S rRNA; its binding is stimulated by other ribosomal proteins, e.g. L4, L17, and L20. It is important during the early stages of 50S assembly. It makes multiple contacts with different domains of the 23S rRNA in the assembled 50S subunit and ribosome. In terms of biological role, the globular domain of the protein is located near the polypeptide exit tunnel on the outside of the subunit, while an extended beta-hairpin is found that lines the wall of the exit tunnel in the center of the 70S ribosome. In Methylobacterium sp. (strain 4-46), this protein is Large ribosomal subunit protein uL22.